We begin with the raw amino-acid sequence, 565 residues long: Alkaline nuclease (565 aa).

Belongs to the herpesviridae alkaline nuclease family. In terms of assembly, interacts with major DNA-binding protein; this interaction increases the nuclease processivity of the alkaline exonuclease.

The protein resides in the host nucleus. Its subcellular location is the host cytoplasm. Its function is as follows. Plays a role in processing non linear or branched viral DNA intermediates in order to promote the production of mature packaged unit-length linear progeny viral DNA molecules. Exhibits endonuclease and exonuclease activities and accepts both double-stranded and single-stranded DNA as substrate. Exonuclease digestion of DNA is in the 5'-&gt; 3' direction and the products are 5'-monophosphate nucleosides. Additionally, forms a recombinase with the major DNA-binding protein, which displays strand exchange activity. In Equus caballus (Horse), this protein is Alkaline nuclease.